The sequence spans 160 residues: Protein Bel-3 (160 aa).

Homodimer.

It localises to the host cytoplasm. The chain is Protein Bel-3 (bel3) from Human spumaretrovirus (SFVcpz(hu)).